A 355-amino-acid polypeptide reads, in one-letter code: D-alanine--D-alanine ligase (355 aa).

The ATP-grasp domain occupies 143–350; that stretch reads KIIFSNLKIP…IEQLVAKLVD (208 aa). 178–233 contacts ATP; sequence LKKLNFPVFVKPSNSGSSLGISKVINKSEIIPALEKARGIDPSILIEEGLEVREIE. 3 residues coordinate Mg(2+): aspartate 303, glutamate 317, and asparagine 319.

Belongs to the D-alanine--D-alanine ligase family. Mg(2+) serves as cofactor. The cofactor is Mn(2+).

It is found in the cytoplasm. The catalysed reaction is 2 D-alanine + ATP = D-alanyl-D-alanine + ADP + phosphate + H(+). The protein operates within cell wall biogenesis; peptidoglycan biosynthesis. In terms of biological role, cell wall formation. This Prochlorococcus marinus (strain AS9601) protein is D-alanine--D-alanine ligase.